The primary structure comprises 443 residues: Mitochondrial enolase superfamily member 1 (443 aa).

Substrate contacts are provided by residues G24–D26 and Y34. Residue S148 is modified to Phosphoserine. Substrate is bound at residue K220. K222 serves as the catalytic Proton donor/acceptor. A Mg(2+)-binding site is contributed by D250. Substrate contacts are provided by residues N252, E276, E305, H355–G357, and E386. Residues E276 and E305 each coordinate Mg(2+). H355 is an active-site residue.

It belongs to the mandelate racemase/muconate lactonizing enzyme family. ENOSF1 subfamily. Requires Mg(2+) as cofactor. Post-translationally, could be sumoylated.

The protein localises to the mitochondrion. It catalyses the reaction L-fuconate = 2-dehydro-3-deoxy-L-fuconate + H2O. Plays a role in the catabolism of L-fucose, a sugar that is part of the carbohydrates that are attached to cellular glycoproteins. Catalyzes the dehydration of L-fuconate to 2-keto-3-deoxy-L-fuconate by the abstraction of the 2-proton to generate an enediolate intermediate that is stabilized by the magnesium ion. May down-regulate thymidylate synthase activity, possibly already at the RNA level, by promoting the degradation of TYMS mRNA via an antisense RNA-based mechanism. In Pongo abelii (Sumatran orangutan), this protein is Mitochondrial enolase superfamily member 1 (ENOSF1).